Consider the following 179-residue polypeptide: Nuclear transcription factor Y subunit B (179 aa).

The interval 1–32 is disordered; the sequence is MAEAPASPGGGGGSHESGSPRGGGGGGSVREQ. Residues 8 to 28 are compositionally biased toward gly residues; sequence PGGGGGSHESGSPRGGGGGGS. Residues 36-42 mediate DNA binding; sequence LPIANIS. The interval 63–74 is subunit association domain (SAD); the sequence is VQECVSEFISFI. The disordered stretch occupies residues 147–179; it reads SSSAAEGMGQQGAYNQGMGYMQPQYHNGDISNV.

The protein belongs to the NFYB/HAP3 subunit family. In terms of assembly, heterotrimeric transcription factor composed of three components, NF-YA, NF-YB and NF-YC. NF-YB and NF-YC must interact and dimerize for NF-YA association and DNA binding.

Its subcellular location is the nucleus. Its function is as follows. Component of the NF-Y/HAP transcription factor complex. The NF-Y complex stimulates the transcription of various genes by recognizing and binding to a CCAAT motif in promoters. This chain is Nuclear transcription factor Y subunit B (NFY2), found in Zea mays (Maize).